A 272-amino-acid polypeptide reads, in one-letter code: NH(3)-dependent NAD(+) synthetase (272 aa).

Residue 45–52 (GISGGQDS) coordinates ATP. Position 51 (Asp-51) interacts with Mg(2+). Arg-138 is a deamido-NAD(+) binding site. Thr-158 provides a ligand contact to ATP. Glu-163 contacts Mg(2+). Deamido-NAD(+) is bound by residues Lys-171 and Asp-178. Positions 187 and 209 each coordinate ATP. A deamido-NAD(+)-binding site is contributed by 258 to 259 (HK).

Belongs to the NAD synthetase family. Homodimer.

The catalysed reaction is deamido-NAD(+) + NH4(+) + ATP = AMP + diphosphate + NAD(+) + H(+). It participates in cofactor biosynthesis; NAD(+) biosynthesis; NAD(+) from deamido-NAD(+) (ammonia route): step 1/1. Its function is as follows. Catalyzes the ATP-dependent amidation of deamido-NAD to form NAD. Uses ammonia as a nitrogen source. The sequence is that of NH(3)-dependent NAD(+) synthetase from Bacillus cereus (strain AH187).